The sequence spans 73 residues: uncharacterized protein (73 aa).

This is an uncharacterized protein from Vertebrata (FPV).